Consider the following 340-residue polypeptide: Branched-chain-amino-acid aminotransferase (340 aa).

The residue at position 187 (Lys-187) is an N6-(pyridoxal phosphate)lysine.

The protein belongs to the class-IV pyridoxal-phosphate-dependent aminotransferase family. Pyridoxal 5'-phosphate serves as cofactor.

The enzyme catalyses L-leucine + 2-oxoglutarate = 4-methyl-2-oxopentanoate + L-glutamate. It carries out the reaction L-isoleucine + 2-oxoglutarate = (S)-3-methyl-2-oxopentanoate + L-glutamate. It catalyses the reaction L-valine + 2-oxoglutarate = 3-methyl-2-oxobutanoate + L-glutamate. Its pathway is amino-acid biosynthesis; L-isoleucine biosynthesis; L-isoleucine from 2-oxobutanoate: step 4/4. It participates in amino-acid biosynthesis; L-leucine biosynthesis; L-leucine from 3-methyl-2-oxobutanoate: step 4/4. The protein operates within amino-acid biosynthesis; L-valine biosynthesis; L-valine from pyruvate: step 4/4. In terms of biological role, acts on leucine, isoleucine and valine. This chain is Branched-chain-amino-acid aminotransferase (ilvE), found in Helicobacter pylori (strain J99 / ATCC 700824) (Campylobacter pylori J99).